We begin with the raw amino-acid sequence, 99 residues long: Co-chaperonin GroES (99 aa).

Belongs to the GroES chaperonin family. As to quaternary structure, heptamer of 7 subunits arranged in a ring. Interacts with the chaperonin GroEL.

The protein resides in the cytoplasm. Together with the chaperonin GroEL, plays an essential role in assisting protein folding. The GroEL-GroES system forms a nano-cage that allows encapsulation of the non-native substrate proteins and provides a physical environment optimized to promote and accelerate protein folding. GroES binds to the apical surface of the GroEL ring, thereby capping the opening of the GroEL channel. This Corynebacterium kroppenstedtii (strain DSM 44385 / JCM 11950 / CIP 105744 / CCUG 35717) protein is Co-chaperonin GroES.